The following is a 165-amino-acid chain: uncharacterized protein (165 aa).

Residues phenylalanine 4–threonine 26 form a helical membrane-spanning segment.

It localises to the membrane. This is an uncharacterized protein from Aquifex aeolicus (strain VF5).